The following is a 49-amino-acid chain: Large ribosomal subunit protein eL40 (49 aa).

It belongs to the eukaryotic ribosomal protein eL40 family.

This chain is Large ribosomal subunit protein eL40, found in Methanopyrus kandleri (strain AV19 / DSM 6324 / JCM 9639 / NBRC 100938).